The chain runs to 70 residues: Small ribosomal subunit protein bS21 (70 aa).

The protein belongs to the bacterial ribosomal protein bS21 family.

The chain is Small ribosomal subunit protein bS21 from Azoarcus sp. (strain BH72).